A 590-amino-acid polypeptide reads, in one-letter code: G protein-coupled receptor kinase 5 (590 aa).

The N-terminal stretch occupies residues 1-185 (MELENIVANT…LERQPVTKNT (185 aa)). The interaction with calmodulin stretch occupies residues 20–39 (GGKRKGKSKKWKEILKFPHI). The region spanning 53 to 171 (YCSLCDKQPI…LDSMFFDRFL (119 aa)) is the RGS domain. The Protein kinase domain occupies 186–448 (FRQYRVLGKG…AAEVKRHPFF (263 aa)). ATP-binding positions include 192-200 (LGKGGFGEV) and K215. The Proton acceptor role is filled by D311. The short motif at 388–395 (RKEKVKRE) is the Nuclear localization signal element. Positions 449–514 (RNMNFKRLEA…GSVSIPWQNE (66 aa)) constitute an AGC-kinase C-terminal domain. S484 carries the phosphoserine; by autocatalysis modification. Position 485 is a phosphothreonine; by autocatalysis (T485). The disordered stretch occupies residues 531 to 590 (GTLPPDLNRNHPPEPPKKGLLQRLFKRQHQNNSKSSPSSKTSFNHHINSNHVSSNSTGSS). The span at 538 to 547 (NRNHPPEPPK) shows a compositional bias: basic and acidic residues. Residues 546–565 (PKKGLLQRLFKRQHQNNSKS) are sufficient for membrane localization. Over residues 563 to 590 (SKSSPSSKTSFNHHINSNHVSSNSTGSS) the composition is skewed to low complexity. S579 carries the post-translational modification Phosphoserine.

Belongs to the protein kinase superfamily. AGC Ser/Thr protein kinase family. GPRK subfamily. In terms of assembly, interacts with ST13 (via the C-terminus 303-319 AA). Interacts with TP53/p53. Interacts with HTR4 (via C-terminus 330-346 AA); this interaction is promoted by 5-HT (serotonin). Interacts with HDAC5. Interacts with GIT1. In terms of processing, autophosphorylated. Autophosphorylation may play a critical role in the regulation of GRK5 kinase activity. Highest levels in heart, placenta, lung &gt; skeletal muscle &gt; brain, liver, pancreas &gt; kidney.

It localises to the cytoplasm. Its subcellular location is the nucleus. It is found in the cell membrane. It catalyses the reaction [G-protein-coupled receptor] + ATP = [G-protein-coupled receptor]-phosphate + ADP + H(+). With respect to regulation, inhibited by calmodulin with an IC(50) of 50 nM. Calmodulin inhibits GRK5 association with receptor and phospholipid. Serine/threonine kinase that phosphorylates preferentially the activated forms of a variety of G-protein-coupled receptors (GPCRs). Such receptor phosphorylation initiates beta-arrestin-mediated receptor desensitization, internalization, and signaling events leading to their down-regulation. Phosphorylates a variety of GPCRs, including adrenergic receptors, muscarinic acetylcholine receptors (more specifically Gi-coupled M2/M4 subtypes), dopamine receptors and opioid receptors. In addition to GPCRs, also phosphorylates various substrates: Hsc70-interacting protein/ST13, TP53/p53, HDAC5, and arrestin-1/ARRB1. Phosphorylation of ARRB1 by GRK5 inhibits G-protein independent MAPK1/MAPK3 signaling downstream of 5HT4-receptors. Phosphorylation of HDAC5, a repressor of myocyte enhancer factor 2 (MEF2) leading to nuclear export of HDAC5 and allowing MEF2-mediated transcription. Phosphorylation of TP53/p53, a crucial tumor suppressor, inhibits TP53/p53-mediated apoptosis. Phosphorylation of ST13 regulates internalization of the chemokine receptor. Phosphorylates rhodopsin (RHO) (in vitro) and a non G-protein-coupled receptor, LRP6 during Wnt signaling (in vitro). The protein is G protein-coupled receptor kinase 5 (GRK5) of Homo sapiens (Human).